Here is a 260-residue protein sequence, read N- to C-terminus: ATP synthase subunit a (260 aa).

The next 7 membrane-spanning stretches (helical) occupy residues 29–49, 95–115, 124–144, 151–171, 191–211, 213–233, and 237–257; these read FSFT…LLLI, FFPC…QGMI, HFLI…IVGF, FFSF…LVLL, MMAG…MLCM, EIFY…LTGL, and VAIL…NDAI.

The protein belongs to the ATPase A chain family. In terms of assembly, F-type ATPases have 2 components, CF(1) - the catalytic core - and CF(0) - the membrane proton channel. CF(1) has five subunits: alpha(3), beta(3), gamma(1), delta(1), epsilon(1). CF(0) has three main subunits: a, b and c.

Its subcellular location is the mitochondrion inner membrane. Functionally, mitochondrial membrane ATP synthase (F(1)F(0) ATP synthase or Complex V) produces ATP from ADP in the presence of a proton gradient across the membrane which is generated by electron transport complexes of the respiratory chain. F-type ATPases consist of two structural domains, F(1) - containing the extramembraneous catalytic core and F(0) - containing the membrane proton channel, linked together by a central stalk and a peripheral stalk. During catalysis, ATP synthesis in the catalytic domain of F(1) is coupled via a rotary mechanism of the central stalk subunits to proton translocation. Key component of the proton channel; it may play a direct role in the translocation of protons across the membrane. The chain is ATP synthase subunit a (ATP6) from Brassica napus (Rape).